Consider the following 352-residue polypeptide: MALNLKALLGMLFVFIGCCSNVVFLELIIQIDPGAGNLITFAQFLFIALEGLVFTSKFFTVRPKIALKDYVILVALFFGANVCNNYAFNFNIPMPLHMIFRSGSLMANMIMGIVLLKKRYNLRQYSSVAMITAGIILCTLVSSGDVKDNTHHSLKVDTSYSDFFWWTVGIGLLTIALLVTAYMGIYQEVIYKKYGKHPSEALFFTHMLPLPGFLIMAGNIVQHFGIAWSSEPVAVPLLGAIGLEWKFPLMLFYLLCNVVTQYVCISAVYVLTTECASLTVTLVVTLRKFVSLLFSIIYFRNPFTLNHWVGTILVFFGTILFANVINQVRDAYRARSSRKTHFDTAPLAKKVE.

10 helical membrane passes run 9–29 (LGML…ELII), 34–54 (GAGN…GLVF), 70–90 (YVIL…AFNF), 96–116 (LHMI…IVLL), 126–146 (SSVA…SGDV), 163–183 (FFWW…TAYM), 201–221 (ALFF…GNIV), 249–271 (LMLF…VYVL), 276–298 (ASLT…SIIY), and 305–325 (LNHW…ANVI). The Prevents secretion from ER motif lies at 350 to 352 (KVE).

It belongs to the nucleotide-sugar transporter family. SLC35B subfamily.

Its subcellular location is the endoplasmic reticulum membrane. In terms of biological role, sugar transporter that specifically mediates the transport of UDP-N-acetylglucosamine (UDP-GlcNAc), GDP-fucose and UDP-xylose. Functions redundantly with Gfr in the O-fucosylation of Notch, positively regulating Notch signaling. Involved in the biosynthesis of heparan sulfate-glycosaminoglycan (HS-GAG) and in Dpp signaling in the wing imaginal disk. The chain is Endoplasmic reticulum GDP-fucose transporter from Drosophila melanogaster (Fruit fly).